The following is a 251-amino-acid chain: Phosphate import ATP-binding protein PstB 2 (251 aa).

An ABC transporter domain is found at 6–246; the sequence is FNIENLDLFY…PRDDRTRGYV (241 aa). ATP is bound at residue 38–45; the sequence is GPSGCGKS.

The protein belongs to the ABC transporter superfamily. Phosphate importer (TC 3.A.1.7) family. In terms of assembly, the complex is composed of two ATP-binding proteins (PstB), two transmembrane proteins (PstC and PstA) and a solute-binding protein (PstS).

Its subcellular location is the cell inner membrane. The enzyme catalyses phosphate(out) + ATP + H2O = ADP + 2 phosphate(in) + H(+). Its function is as follows. Part of the ABC transporter complex PstSACB involved in phosphate import. Responsible for energy coupling to the transport system. In Vibrio cholerae serotype O1 (strain ATCC 39315 / El Tor Inaba N16961), this protein is Phosphate import ATP-binding protein PstB 2.